The chain runs to 344 residues: Fructose-1,6-bisphosphatase class 1 (344 aa).

4 residues coordinate Mg(2+): glutamate 90, aspartate 109, leucine 111, and aspartate 112. Substrate-binding positions include 112–115 and asparagine 200; that span reads DGSS. Glutamate 271 provides a ligand contact to Mg(2+).

The protein belongs to the FBPase class 1 family. Homotetramer. Requires Mg(2+) as cofactor.

Its subcellular location is the cytoplasm. The catalysed reaction is beta-D-fructose 1,6-bisphosphate + H2O = beta-D-fructose 6-phosphate + phosphate. Its pathway is carbohydrate biosynthesis; gluconeogenesis. The protein is Fructose-1,6-bisphosphatase class 1 of Nitrobacter vulgaris.